The sequence spans 760 residues: Forkhead box protein M1 (760 aa).

Disordered stretches follow at residues 1 to 54 (MRTS…AESS) and 95 to 167 (GKES…SYAG). Low complexity-rich tracts occupy residues 43–54 (PAQASQEVAESS) and 110–124 (SSGGPSSHPSQPQAH). The segment covering 125-134 (SSRDSKRAEV) has biased composition (basic and acidic residues). The segment covering 140-149 (GPKPAAKGVP) has biased composition (low complexity). Glycyl lysine isopeptide (Lys-Gly) (interchain with G-Cter in SUMO2) cross-links involve residues lysine 199 and lysine 323. A DNA-binding region (fork-head) is located at residues 233–325 (ERPPYSYMAM…LTLDQVFKPL (93 aa)). A disordered region spans residues 323 to 348 (KPLEPGSPQSPEHLESQQKRPNPELH). Residue serine 329 is modified to Phosphoserine. The span at 334–348 (EHLESQQKRPNPELH) shows a compositional bias: basic and acidic residues. A Glycyl lysine isopeptide (Lys-Gly) (interchain with G-Cter in SUMO2) cross-link involves residue lysine 354. Serine 374 is subject to Phosphoserine; by CHEK2. Residues lysine 420 and lysine 438 each participate in a glycyl lysine isopeptide (Lys-Gly) (interchain with G-Cter in SUMO2) cross-link. Disordered regions lie at residues 500 to 560 (SWED…PDLF), 577 to 635 (ESSE…LDFS), and 660 to 709 (PLKS…IPSL). Serine 521 is subject to Phosphoserine. Basic and acidic residues predominate over residues 531-542 (VTKRREKREVSR). Polar residues predominate over residues 604-613 (PVSSTPSKSV). Threonine 608 bears the Phosphothreonine; by CDK1 mark. A Phosphothreonine modification is found at threonine 624. A phosphoserine; by PLK1 mark is found at serine 727 and serine 736.

Post-translationally, phosphorylated in M (mitotic) phase. Phosphorylation by the checkpoint kinase CHEK2 in response to DNA damage increases the FOXM1 protein stability probably stimulating the transcription of genes involved in DNA repair. Phosphorylated by CDK1 in late S and G2 phases, creating docking sites for the POLO box domains of PLK1. Subsequently, PLK1 binds and phosphorylates FOXM1, leading to activation of transcriptional activity and subsequent enhanced expression of key mitotic regulators. Phosphorylated by GSK3B leading to ubiquitination and proteasomal degradation. In terms of tissue distribution, expressed in fetal heart, brain, liver, lung, kidney and limb, but only in adult thymus. Appears to be expressed only in adult organs containing proliferating/cycling cells or in response to growth factors.

The protein resides in the nucleus. Its function is as follows. Transcription factor regulating the expression of cell cycle genes essential for DNA replication and mitosis. Plays a role in the control of cell proliferation. Also plays a role in DNA break repair, participating in the DNA damage checkpoint response. Promotes transcription of PHB2. In Mus musculus (Mouse), this protein is Forkhead box protein M1 (Foxm1).